A 448-amino-acid chain; its full sequence is UDP-N-acetylmuramoylalanine--D-glutamate ligase (448 aa).

112-118 (GSNAKST) contacts ATP.

This sequence belongs to the MurCDEF family.

It is found in the cytoplasm. It catalyses the reaction UDP-N-acetyl-alpha-D-muramoyl-L-alanine + D-glutamate + ATP = UDP-N-acetyl-alpha-D-muramoyl-L-alanyl-D-glutamate + ADP + phosphate + H(+). The protein operates within cell wall biogenesis; peptidoglycan biosynthesis. Functionally, cell wall formation. Catalyzes the addition of glutamate to the nucleotide precursor UDP-N-acetylmuramoyl-L-alanine (UMA). This chain is UDP-N-acetylmuramoylalanine--D-glutamate ligase, found in Acinetobacter baumannii (strain ATCC 17978 / DSM 105126 / CIP 53.77 / LMG 1025 / NCDC KC755 / 5377).